A 250-amino-acid chain; its full sequence is MSYQVEVCIDNIESLHNALEGGATRIELCSSLALGGLTPSYGFMTLAAKLSTVPVYAMIRPRQGDFLYSDDEFAIIQQDILSAQQAGLQGVVFGLLTADGDIDVARTRVLIELAHSLQLGVTFHRAFDQCRDPFAALEQIIDLGCERILTSGLAASAPLGKEMLTQLVAHSQSRLAIMAGAGVSPVNVADLALTTGVKELHLSGKSTRPSKMTFIASGSKMGAADQDDFIIPITHTATIRNTVLALKSIS.

The protein belongs to the CutC family.

Its subcellular location is the cytoplasm. The chain is PF03932 family protein CutC from Vibrio vulnificus (strain YJ016).